Consider the following 208-residue polypeptide: Putative dioxygenase RBE_0329 (208 aa).

It belongs to the intradiol ring-cleavage dioxygenase family.

In Rickettsia bellii (strain RML369-C), this protein is Putative dioxygenase RBE_0329.